The following is a 345-amino-acid chain: Holliday junction branch migration complex subunit RuvB (345 aa).

Residues 4–194 (TDKLFGAAPE…FGIVARLEFY (191 aa)) are large ATPase domain (RuvB-L). Residues Leu33, Arg34, Gly75, Lys78, Thr79, Thr80, 141 to 143 (EDY), Arg184, Tyr194, and Arg231 contribute to the ATP site. Thr79 contributes to the Mg(2+) binding site. The small ATPAse domain (RuvB-S) stretch occupies residues 195-265 (NAEELTRIVS…VADAALAMLD (71 aa)). The interval 268–345 (PAGLDVMDRK…LHFGLPVKDA (78 aa)) is head domain (RuvB-H). DNA contacts are provided by Arg323 and Arg328.

This sequence belongs to the RuvB family. Homohexamer. Forms an RuvA(8)-RuvB(12)-Holliday junction (HJ) complex. HJ DNA is sandwiched between 2 RuvA tetramers; dsDNA enters through RuvA and exits via RuvB. An RuvB hexamer assembles on each DNA strand where it exits the tetramer. Each RuvB hexamer is contacted by two RuvA subunits (via domain III) on 2 adjacent RuvB subunits; this complex drives branch migration. In the full resolvosome a probable DNA-RuvA(4)-RuvB(12)-RuvC(2) complex forms which resolves the HJ.

The protein localises to the cytoplasm. The enzyme catalyses ATP + H2O = ADP + phosphate + H(+). Functionally, the RuvA-RuvB-RuvC complex processes Holliday junction (HJ) DNA during genetic recombination and DNA repair, while the RuvA-RuvB complex plays an important role in the rescue of blocked DNA replication forks via replication fork reversal (RFR). RuvA specifically binds to HJ cruciform DNA, conferring on it an open structure. The RuvB hexamer acts as an ATP-dependent pump, pulling dsDNA into and through the RuvAB complex. RuvB forms 2 homohexamers on either side of HJ DNA bound by 1 or 2 RuvA tetramers; 4 subunits per hexamer contact DNA at a time. Coordinated motions by a converter formed by DNA-disengaged RuvB subunits stimulates ATP hydrolysis and nucleotide exchange. Immobilization of the converter enables RuvB to convert the ATP-contained energy into a lever motion, pulling 2 nucleotides of DNA out of the RuvA tetramer per ATP hydrolyzed, thus driving DNA branch migration. The RuvB motors rotate together with the DNA substrate, which together with the progressing nucleotide cycle form the mechanistic basis for DNA recombination by continuous HJ branch migration. Branch migration allows RuvC to scan DNA until it finds its consensus sequence, where it cleaves and resolves cruciform DNA. The sequence is that of Holliday junction branch migration complex subunit RuvB from Chromobacterium violaceum (strain ATCC 12472 / DSM 30191 / JCM 1249 / CCUG 213 / NBRC 12614 / NCIMB 9131 / NCTC 9757 / MK).